Reading from the N-terminus, the 487-residue chain is Glutamate--tRNA ligase (487 aa).

Positions 10–20 (PSPTGYMHVGN) match the 'HIGH' region motif. Residues 251–255 (KLSKR) carry the 'KMSKS' region motif. Position 254 (Lys-254) interacts with ATP.

This sequence belongs to the class-I aminoacyl-tRNA synthetase family. Glutamate--tRNA ligase type 1 subfamily. In terms of assembly, monomer.

It localises to the cytoplasm. The catalysed reaction is tRNA(Glu) + L-glutamate + ATP = L-glutamyl-tRNA(Glu) + AMP + diphosphate. Functionally, catalyzes the attachment of glutamate to tRNA(Glu) in a two-step reaction: glutamate is first activated by ATP to form Glu-AMP and then transferred to the acceptor end of tRNA(Glu). This Clostridium kluyveri (strain ATCC 8527 / DSM 555 / NBRC 12016 / NCIMB 10680 / K1) protein is Glutamate--tRNA ligase.